A 333-amino-acid chain; its full sequence is Anthranilate phosphoribosyltransferase (333 aa).

5-phospho-alpha-D-ribose 1-diphosphate-binding positions include glycine 81, 84–85 (GD), threonine 89, 91–94 (NIST), 109–117 (KHGNRSVSS), and alanine 121. Anthranilate is bound at residue glycine 81. Residue serine 93 coordinates Mg(2+). Residue asparagine 112 coordinates anthranilate. Arginine 167 contributes to the anthranilate binding site. Aspartate 225 and glutamate 226 together coordinate Mg(2+).

This sequence belongs to the anthranilate phosphoribosyltransferase family. As to quaternary structure, homodimer. The cofactor is Mg(2+).

It carries out the reaction N-(5-phospho-beta-D-ribosyl)anthranilate + diphosphate = 5-phospho-alpha-D-ribose 1-diphosphate + anthranilate. It functions in the pathway amino-acid biosynthesis; L-tryptophan biosynthesis; L-tryptophan from chorismate: step 2/5. Its function is as follows. Catalyzes the transfer of the phosphoribosyl group of 5-phosphorylribose-1-pyrophosphate (PRPP) to anthranilate to yield N-(5'-phosphoribosyl)-anthranilate (PRA). This is Anthranilate phosphoribosyltransferase from Haemophilus influenzae (strain PittEE).